The primary structure comprises 246 residues: tRNA (guanine-N(1)-)-methyltransferase (246 aa).

Residues Gly-112 and 131-136 (IGDYVL) contribute to the S-adenosyl-L-methionine site.

This sequence belongs to the RNA methyltransferase TrmD family. As to quaternary structure, homodimer.

It is found in the cytoplasm. It carries out the reaction guanosine(37) in tRNA + S-adenosyl-L-methionine = N(1)-methylguanosine(37) in tRNA + S-adenosyl-L-homocysteine + H(+). Specifically methylates guanosine-37 in various tRNAs. The chain is tRNA (guanine-N(1)-)-methyltransferase from Thermosipho africanus (strain TCF52B).